The primary structure comprises 350 residues: tRNA uridine(34) hydroxylase (350 aa).

The 95-residue stretch at 146–240 folds into the Rhodanese domain; sequence DDPDAVFIDM…YARKAREQGL (95 aa). Cys200 serves as the catalytic Cysteine persulfide intermediate. Residues 314-350 are disordered; that stretch reads PEEEQRRRRAGRENGNKIFNKSRGRLNTQLGIPDPAE. Positions 316-328 are enriched in basic and acidic residues; that stretch reads EEQRRRRAGRENG.

The protein belongs to the TrhO family.

It catalyses the reaction uridine(34) in tRNA + AH2 + O2 = 5-hydroxyuridine(34) in tRNA + A + H2O. Its function is as follows. Catalyzes oxygen-dependent 5-hydroxyuridine (ho5U) modification at position 34 in tRNAs. The polypeptide is tRNA uridine(34) hydroxylase (Citrobacter koseri (strain ATCC BAA-895 / CDC 4225-83 / SGSC4696)).